The sequence spans 37 residues: U1-ectatotoxin-Eb1a subunit B (37 aa).

Belongs to the ectatomin family. Ectatomin-Eq subfamily. As to quaternary structure, heterodimer of subunits A and B; disulfide-linked. As to expression, expressed by the venom gland.

Its subcellular location is the secreted. The protein resides in the target cell membrane. The protein is U1-ectatotoxin-Eb1a subunit B of Ectatomma brunneum (Ant).